The primary structure comprises 122 residues: Small ribosomal subunit protein uS12 (122 aa).

Positions 1–45 are disordered; that stretch reads MPTTNQLVRKERKRQTKKTATPALQGSPQRRGVCTRVSTTTPKKP. Over residues 18 to 28 the composition is skewed to polar residues; sequence KTATPALQGSP. Asp-89 bears the 3-methylthioaspartic acid mark.

The protein belongs to the universal ribosomal protein uS12 family. As to quaternary structure, part of the 30S ribosomal subunit. Contacts proteins S8 and S17. May interact with IF1 in the 30S initiation complex.

Its function is as follows. With S4 and S5 plays an important role in translational accuracy. Functionally, interacts with and stabilizes bases of the 16S rRNA that are involved in tRNA selection in the A site and with the mRNA backbone. Located at the interface of the 30S and 50S subunits, it traverses the body of the 30S subunit contacting proteins on the other side and probably holding the rRNA structure together. The combined cluster of proteins S8, S12 and S17 appears to hold together the shoulder and platform of the 30S subunit. This Rubrobacter xylanophilus (strain DSM 9941 / JCM 11954 / NBRC 16129 / PRD-1) protein is Small ribosomal subunit protein uS12.